The following is a 210-amino-acid chain: Small ribosomal subunit protein eS8y (210 aa).

Positions 1–22 are disordered; that stretch reads MGISRDSIHKRRATGGKQKMWR. A compositionally biased stretch (basic residues) spans 8-22; the sequence is IHKRRATGGKQKMWR.

It belongs to the eukaryotic ribosomal protein eS8 family.

This is Small ribosomal subunit protein eS8y (RPS8B) from Arabidopsis thaliana (Mouse-ear cress).